Consider the following 486-residue polypeptide: Aspartyl/glutamyl-tRNA(Asn/Gln) amidotransferase subunit B (486 aa).

This sequence belongs to the GatB/GatE family. GatB subfamily. As to quaternary structure, heterotrimer of A, B and C subunits.

It catalyses the reaction L-glutamyl-tRNA(Gln) + L-glutamine + ATP + H2O = L-glutaminyl-tRNA(Gln) + L-glutamate + ADP + phosphate + H(+). The enzyme catalyses L-aspartyl-tRNA(Asn) + L-glutamine + ATP + H2O = L-asparaginyl-tRNA(Asn) + L-glutamate + ADP + phosphate + 2 H(+). Its function is as follows. Allows the formation of correctly charged Asn-tRNA(Asn) or Gln-tRNA(Gln) through the transamidation of misacylated Asp-tRNA(Asn) or Glu-tRNA(Gln) in organisms which lack either or both of asparaginyl-tRNA or glutaminyl-tRNA synthetases. The reaction takes place in the presence of glutamine and ATP through an activated phospho-Asp-tRNA(Asn) or phospho-Glu-tRNA(Gln). The chain is Aspartyl/glutamyl-tRNA(Asn/Gln) amidotransferase subunit B from Leptospira borgpetersenii serovar Hardjo-bovis (strain JB197).